The sequence spans 442 residues: Putative FNIP repeat-containing protein L170 (442 aa).

FNIP repeat units lie at residues 213–252, 253–294, and 295–348; these read FNSS…IGRG, FNSE…LGCF, and FNQS…FGMY.

This is Putative FNIP repeat-containing protein L170 from Acanthamoeba polyphaga mimivirus (APMV).